Here is a 337-residue protein sequence, read N- to C-terminus: Tert-butanol monooxygenase / tert-amyl alcohol desaturase reductase subunit (337 aa).

The FAD-binding FR-type domain maps to 9-114 (KYPKTALNLR…GHPRNNFPLI (106 aa)). One can recognise a 2Fe-2S ferredoxin-type domain in the interval 254–337 (FQIKIASTGT…SKGATLVLDL (84 aa)). The [2Fe-2S] cluster site is built by C288, C293, C296, and C324.

This sequence belongs to the PDR/VanB family. This two-component enzyme is composed of an oxygenase (MdpJ) and a reductase (MdpK). It depends on [2Fe-2S] cluster as a cofactor.

Functionally, reductase component of a two-component system involved in the degradation of tertiary alcohols such as tert-butyl alcohol (TBA) and tert-amyl alcohol (TAA). MdpK probably provides electrons via its [2Fe-2S] iron-sulfur cluster to the MdpJ oxygenase subunit. This is Tert-butanol monooxygenase / tert-amyl alcohol desaturase reductase subunit from Aquincola tertiaricarbonis.